Consider the following 357-residue polypeptide: Histidinol-phosphate aminotransferase 1 (357 aa).

The residue at position 210 (Lys-210) is an N6-(pyridoxal phosphate)lysine.

Belongs to the class-II pyridoxal-phosphate-dependent aminotransferase family. Histidinol-phosphate aminotransferase subfamily. Homodimer. Pyridoxal 5'-phosphate serves as cofactor.

The enzyme catalyses L-histidinol phosphate + 2-oxoglutarate = 3-(imidazol-4-yl)-2-oxopropyl phosphate + L-glutamate. It participates in amino-acid biosynthesis; L-histidine biosynthesis; L-histidine from 5-phospho-alpha-D-ribose 1-diphosphate: step 7/9. This is Histidinol-phosphate aminotransferase 1 from Methylococcus capsulatus (strain ATCC 33009 / NCIMB 11132 / Bath).